The sequence spans 597 residues: Tubulin polyglutamylase ttll-4 (597 aa).

Residues 1 to 18 are compositionally biased toward polar residues; it reads MSSGYSSAPSVSHTSSEA. Disordered stretches follow at residues 1–39 and 80–107; these read MSSG…DEQR and SKSK…FLKS. Residues 26–35 show a composition bias toward acidic residues; that stretch reads YEDGVDEEAS. Positions 134–472 constitute a TTL domain; the sequence is QSRLTWCHNS…HVPPSFDKLH (339 aa). ATP is bound by residues K250, 256–257, 278–281, and 291–293; these read RG, QHYI, and KFD. Residue R256 participates in a protein binding. R317 is a binding site for L-glutamate. Residue 338–339 participates in ATP binding; sequence TN. Residues Y340, S341, and K358 each coordinate L-glutamate. Residues D418, E431, and N433 each contribute to the Mg(2+) site. An L-glutamate-binding site is contributed by K449.

It belongs to the tubulin--tyrosine ligase family. Mg(2+) serves as cofactor.

The enzyme catalyses L-glutamyl-[protein] + L-glutamate + ATP = gamma-L-glutamyl-L-glutamyl-[protein] + ADP + phosphate + H(+). In terms of biological role, monoglutamylase which modifies tubulin, adding a single glutamate on the gamma-carboxyl group of specific glutamate residues of target proteins. Involved in the side-chain initiation step of the polyglutamylation reaction but not in the elongation step. Preferentially modifies beta-tail tubulin over the alpha-tubulin. Involved in side-chain glutamylation of tubulin in sensory cilia. Together with ttll-5 and ttll-11, required for male mating. The protein is Tubulin polyglutamylase ttll-4 (ttll-4) of Caenorhabditis briggsae.